The sequence spans 643 residues: Phosphomethylpyrimidine synthase (643 aa).

Substrate contacts are provided by residues N248, M277, Y306, H342, 362 to 364 (SRG), 403 to 406 (DGLR), and E442. H446 is a Zn(2+) binding site. Y469 serves as a coordination point for substrate. H510 contributes to the Zn(2+) binding site. 3 residues coordinate [4Fe-4S] cluster: C590, C593, and C598.

This sequence belongs to the ThiC family. Homodimer. The cofactor is [4Fe-4S] cluster.

It carries out the reaction 5-amino-1-(5-phospho-beta-D-ribosyl)imidazole + S-adenosyl-L-methionine = 4-amino-2-methyl-5-(phosphooxymethyl)pyrimidine + CO + 5'-deoxyadenosine + formate + L-methionine + 3 H(+). The protein operates within cofactor biosynthesis; thiamine diphosphate biosynthesis. Its function is as follows. Catalyzes the synthesis of the hydroxymethylpyrimidine phosphate (HMP-P) moiety of thiamine from aminoimidazole ribotide (AIR) in a radical S-adenosyl-L-methionine (SAM)-dependent reaction. In Burkholderia lata (strain ATCC 17760 / DSM 23089 / LMG 22485 / NCIMB 9086 / R18194 / 383), this protein is Phosphomethylpyrimidine synthase.